The following is a 159-amino-acid chain: Large ribosomal subunit protein uL11 (159 aa).

Belongs to the universal ribosomal protein uL11 family. In terms of assembly, part of the ribosomal stalk of the 50S ribosomal subunit. Interacts with L10 and the large rRNA to form the base of the stalk. L10 forms an elongated spine to which L12 dimers bind in a sequential fashion forming a multimeric L10(L12)X complex.

Its function is as follows. Forms part of the ribosomal stalk which helps the ribosome interact with GTP-bound translation factors. In Methanococcus vannielii (strain ATCC 35089 / DSM 1224 / JCM 13029 / OCM 148 / SB), this protein is Large ribosomal subunit protein uL11.